Consider the following 111-residue polypeptide: T cell receptor alpha variable 18 (111 aa).

Residues 1-20 (MLSASCSGLVILLIFRRTSG) form the signal peptide. The Ig-like domain maps to 21–111 (DSVTQTEGPV…DSAVYYCALR (91 aa)). N-linked (GlcNAc...) asparagine glycosylation occurs at asparagine 41. A disulfide bond links cysteine 42 and cysteine 108.

As to quaternary structure, alpha-beta TR is a heterodimer composed of an alpha and beta chain; disulfide-linked. The alpha-beta TR is associated with the transmembrane signaling CD3 coreceptor proteins to form the TR-CD3 (TcR or TCR). The assembly of alpha-beta TR heterodimers with CD3 occurs in the endoplasmic reticulum where a single alpha-beta TR heterodimer associates with one CD3D-CD3E heterodimer, one CD3G-CD3E heterodimer and one CD247 homodimer forming a stable octameric structure. CD3D-CD3E and CD3G-CD3E heterodimers preferentially associate with TR alpha and TR beta chains, respectively. The association of the CD247 homodimer is the last step of TcR assembly in the endoplasmic reticulum and is required for transport to the cell surface.

It localises to the cell membrane. Its function is as follows. V region of the variable domain of T cell receptor (TR) alpha chain that participates in the antigen recognition. Alpha-beta T cell receptors are antigen specific receptors which are essential to the immune response and are present on the cell surface of T lymphocytes. Recognize peptide-major histocompatibility (MH) (pMH) complexes that are displayed by antigen presenting cells (APC), a prerequisite for efficient T cell adaptive immunity against pathogens. Binding of alpha-beta TR to pMH complex initiates TR-CD3 clustering on the cell surface and intracellular activation of LCK that phosphorylates the ITAM motifs of CD3G, CD3D, CD3E and CD247 enabling the recruitment of ZAP70. In turn ZAP70 phosphorylates LAT, which recruits numerous signaling molecules to form the LAT signalosome. The LAT signalosome propagates signal branching to three major signaling pathways, the calcium, the mitogen-activated protein kinase (MAPK) kinase and the nuclear factor NF-kappa-B (NF-kB) pathways, leading to the mobilization of transcription factors that are critical for gene expression and essential for T cell growth and differentiation. The T cell repertoire is generated in the thymus, by V-(D)-J rearrangement. This repertoire is then shaped by intrathymic selection events to generate a peripheral T cell pool of self-MH restricted, non-autoaggressive T cells. Post-thymic interaction of alpha-beta TR with the pMH complexes shapes TR structural and functional avidity. The sequence is that of T cell receptor alpha variable 18 from Homo sapiens (Human).